A 216-amino-acid chain; its full sequence is MOB kinase activator 3C (216 aa).

Residues cysteine 82, cysteine 87, histidine 164, and histidine 169 each coordinate Zn(2+).

Belongs to the MOB1/phocein family.

Its function is as follows. May regulate the activity of kinases. This Homo sapiens (Human) protein is MOB kinase activator 3C (MOB3C).